The following is a 329-amino-acid chain: Elongation factor Ts (329 aa).

Residues 79-82 (TDFV) form an involved in Mg(2+) ion dislocation from EF-Tu region.

It belongs to the EF-Ts family.

It localises to the cytoplasm. Associates with the EF-Tu.GDP complex and induces the exchange of GDP to GTP. It remains bound to the aminoacyl-tRNA.EF-Tu.GTP complex up to the GTP hydrolysis stage on the ribosome. The chain is Elongation factor Ts from Phocaeicola vulgatus (strain ATCC 8482 / DSM 1447 / JCM 5826 / CCUG 4940 / NBRC 14291 / NCTC 11154) (Bacteroides vulgatus).